The following is a 49-amino-acid chain: Large ribosomal subunit protein bL33B (49 aa).

This sequence belongs to the bacterial ribosomal protein bL33 family.

In Lactococcus lactis subsp. lactis (strain IL1403) (Streptococcus lactis), this protein is Large ribosomal subunit protein bL33B (rpmG2).